The following is a 1449-amino-acid chain: ABC transporter G family member 21 (1449 aa).

Over residues 1 to 10 (MEEYELREIA) the composition is skewed to basic and acidic residues. The interval 1-49 (MEEYELREIALQEGGSNLDINTPPNYDNPVGDGSSPPDSPDIQKSENQF) is disordered. A compositionally biased stretch (polar residues) spans 14–25 (GGSNLDINTPPN). In terms of domain architecture, ABC transporter 1 spans 130–383 (ISFFNLFKPS…FIDLGFDCEP (254 aa)). Positions 488–731 (WGDKFSLISR…ILSVEGKDYL (244 aa)) constitute an ABC transmembrane type-2 1 domain. A run of 5 helical transmembrane segments spans residues 519-539 (IPGL…NAFL), 577-597 (IPLT…MFGL), 602-622 (GKFF…TNLF), 634-654 (ISQN…GYTI), and 747-767 (FITY…MEYF). The ABC transporter 2 domain occupies 818–1062 (FTWQNINYTV…LTSYFERYGV (245 aa)). An ATP-binding site is contributed by 854–861 (GSSGAGKT). The ABC transmembrane type-2 2 domain maps to 1152-1386 (FYTYGSFIQS…PISEPLTGYV (235 aa)). A run of 6 helical transmembrane segments spans residues 1155–1175 (YGSF…FWSL), 1188–1208 (FIFE…PQFI), 1228–1248 (FAIS…TIFF), 1266–1286 (FYFW…GQAV), 1296–1316 (AHTL…VMVI), and 1423–1443 (LALI…FVYI).

Belongs to the ABC transporter superfamily. ABCG family. PDR (TC 3.A.1.205) subfamily.

It is found in the membrane. The polypeptide is ABC transporter G family member 21 (abcG21) (Dictyostelium discoideum (Social amoeba)).